A 151-amino-acid chain; its full sequence is Small ribosomal subunit protein uS13m (151 aa).

It belongs to the universal ribosomal protein uS13 family. In terms of assembly, component of the mitochondrial small ribosomal subunit (mt-SSU). Mature yeast 74S mitochondrial ribosomes consist of a small (37S) and a large (54S) subunit. The 37S small subunit contains a 15S ribosomal RNA (15S mt-rRNA) and at least 32 different proteins. The 54S large subunit contains a 21S rRNA (21S mt-rRNA) and at least 45 different proteins.

It is found in the mitochondrion. Functionally, component of the mitochondrial ribosome (mitoribosome), a dedicated translation machinery responsible for the synthesis of mitochondrial genome-encoded proteins, including at least some of the essential transmembrane subunits of the mitochondrial respiratory chain. The mitoribosomes are attached to the mitochondrial inner membrane and translation products are cotranslationally integrated into the membrane. In Schizosaccharomyces pombe (strain 972 / ATCC 24843) (Fission yeast), this protein is Small ribosomal subunit protein uS13m (sws2).